Here is a 513-residue protein sequence, read N- to C-terminus: uncharacterized protein (513 aa).

Disordered regions lie at residues 72-113 (GVVP…TGQF) and 155-262 (IMGG…NPRF). Over residues 82–106 (ANRTANPNTNSNPNPNATNAQPNPT) the composition is skewed to low complexity. Polar residues-rich tracts occupy residues 164–189 (EANS…QTQG) and 210–228 (TPLN…EFQQ). The span at 229–238 (TTSPIFSSSS) shows a compositional bias: low complexity. Residues 239–248 (TPPPPPPRPS) show a composition bias toward pro residues. Residues 253–262 (GESQNTNPRF) show a composition bias toward polar residues. Residues 396–437 (CTICMEMFKINDDVIQLPCKHYFHENCIKPWLRVNGTCAICR) form an RING-type; atypical zinc finger. The segment at 439-513 (PVDPNSQQRN…DDFVDEEPLE (75 aa)) is disordered. Residues 442-493 (PNSQQRNNTSTDSANGHNPSNHANPSTSTTNDQGATLRNESFNAASQSNLSS) are compositionally biased toward polar residues.

This is an uncharacterized protein from Schizosaccharomyces pombe (strain 972 / ATCC 24843) (Fission yeast).